The chain runs to 764 residues: Semaphorin-3D (764 aa).

The first 41 residues, 1-41 (MKTAGEPDRRRQRRQVRTGRFSCAWWSTSVMLFFSLPEGNC), serve as a signal peptide directing secretion. One can recognise a Sema domain in the interval 48 to 535 (RVKLGYKDLI…GSDGLVQVSL (488 aa)). Residues Cys121 and Cys132 are joined by a disulfide bond. Asn143 carries N-linked (GlcNAc...) asparagine glycosylation. Disulfide bonds link Cys150-Cys159, Cys290-Cys402, and Cys314-Cys362. Residue Asn490 is glycosylated (N-linked (GlcNAc...) asparagine). An intrachain disulfide couples Cys538 to Cys556. Asn610 carries an N-linked (GlcNAc...) asparagine glycan. One can recognise an Ig-like C2-type domain in the interval 661–740 (GDAGSYFCTS…EYCETMWHRE (80 aa)). Cys668 and Cys733 form a disulfide bridge. The segment at 743 to 764 (QKQKGKWKHVQELRKSRNRRHH) is disordered.

Belongs to the semaphorin family.

The protein resides in the secreted. Its function is as follows. May play a role in the guidance of several axon pathways. The sequence is that of Semaphorin-3D (sema3d) from Danio rerio (Zebrafish).